We begin with the raw amino-acid sequence, 1450 residues long: Auxilin-like protein 1 (1450 aa).

Disordered stretches follow at residues 117–142 (NEDK…GKKS), 241–318 (STRD…AESS), 357–383 (DSKI…SQIL), 459–480 (NSKQ…TKQE), 512–541 (SQKD…SQEM), 556–575 (EETP…EKSE), 908–946 (DRSE…RSSF), 961–1046 (EQHR…ELEH), 1077–1168 (GAAT…ERKQ), 1192–1241 (AGKT…AERA), and 1254–1328 (AMEK…SDRA). The stretch at 316–344 (ESSAALKKAIEEAQIRMNIAKQMMEKKKS) forms a coiled coil. Basic and acidic residues predominate over residues 357–366 (DSKIENKGNT). 7 stretches are compositionally biased toward basic and acidic residues: residues 512-524 (SQKD…EKEN), 564-575 (SKSEMNIEEKSE), 908-923 (DRSE…RFDQ), 1037-1046 (RNGDKKELEH), 1117-1131 (NMKE…RSSM), 1147-1168 (ETVE…ERKQ), and 1192-1226 (AGKT…KLSS). Coiled coils occupy residues 1142–1184 (SQNK…RERA) and 1219–1257 (EVND…AMEK). Low complexity predominate over residues 1270-1299 (SYGGSKSFSSSGERRGSSSSGTENKSSGPS). A compositionally biased stretch (basic and acidic residues) spans 1310 to 1328 (PIQRCKARSERHQRTSDRA). The stretch at 1327–1355 (RAAEALAEKKLRDLKTQKEQTERNRLAEA) forms a coiled coil. The J domain occupies 1377-1450 (TLQYILGAES…AWNKFGADER (74 aa)).

The chain is Auxilin-like protein 1 (AUL1) from Arabidopsis thaliana (Mouse-ear cress).